Here is a 518-residue protein sequence, read N- to C-terminus: Chromosomal replication initiator protein DnaA (518 aa).

A domain I, interacts with DnaA modulators region spans residues 1 to 72; it reads MTLAEFWPLC…VREELAAGRS (72 aa). The interval 72-180 is domain II; that stretch reads SAFVFKPGEG…DAEEARYEQT (109 aa). The tract at residues 181-397 is domain III, AAA+ region; the sequence is NLSPDYTFDT…GAFNRVGASS (217 aa). 4 residues coordinate ATP: G225, G227, K228, and T229. The domain IV, binds dsDNA stretch occupies residues 398 to 518; the sequence is RFMNRPVIDI…YEKLLILIQN (121 aa).

Belongs to the DnaA family. As to quaternary structure, oligomerizes as a right-handed, spiral filament on DNA at oriC.

It is found in the cytoplasm. Plays an essential role in the initiation and regulation of chromosomal replication. ATP-DnaA binds to the origin of replication (oriC) to initiate formation of the DNA replication initiation complex once per cell cycle. Binds the DnaA box (a 9 base pair repeat at the origin) and separates the double-stranded (ds)DNA. Forms a right-handed helical filament on oriC DNA; dsDNA binds to the exterior of the filament while single-stranded (ss)DNA is stabiized in the filament's interior. The ATP-DnaA-oriC complex binds and stabilizes one strand of the AT-rich DNA unwinding element (DUE), permitting loading of DNA polymerase. After initiation quickly degrades to an ADP-DnaA complex that is not apt for DNA replication. Binds acidic phospholipids. The protein is Chromosomal replication initiator protein DnaA of Neisseria meningitidis serogroup C / serotype 2a (strain ATCC 700532 / DSM 15464 / FAM18).